A 129-amino-acid chain; its full sequence is MTESDVDSGSKKYLSNHKGIFIHVTLEELKRYHQLTPEQKRLIRAIVKTLIHNPQLLDESSYLYRLLASKAISQFVCPLCLMPFSSSVSLKQHIRYTEHTKVCPVCKKEFTSTDSALDHVCKKHNICVS.

2 consecutive C2H2-type zinc fingers follow at residues 75-99 (FVCP…YTEH) and 101-124 (KVCP…CKKH).

Functionally, essential for virus function. This is an uncharacterized protein from Saccharolobus solfataricus (Sulfolobus solfataricus).